An 84-amino-acid chain; its full sequence is MPVKQQIGIVISNKMQKTIVVKIENRYPHPMYSKTLIKTKKYLAHDELGECNIGDQVLVEECRPLSKRKRWKLIKILSKSSLIN.

The protein belongs to the universal ribosomal protein uS17 family. Part of the 30S ribosomal subunit.

It is found in the plastid. It localises to the chloroplast. Functionally, one of the primary rRNA binding proteins, it binds specifically to the 5'-end of 16S ribosomal RNA. In Phaeodactylum tricornutum (strain CCAP 1055/1), this protein is Small ribosomal subunit protein uS17c (rps17).